The chain runs to 561 residues: Dihydroxy-acid dehydratase (561 aa).

Residue C51 participates in [2Fe-2S] cluster binding. Position 83 (D83) interacts with Mg(2+). C124 contributes to the [2Fe-2S] cluster binding site. The Mg(2+) site is built by D125 and K126. The residue at position 126 (K126) is an N6-carboxylysine. C196 is a binding site for [2Fe-2S] cluster. E448 contacts Mg(2+). S474 functions as the Proton acceptor in the catalytic mechanism.

This sequence belongs to the IlvD/Edd family. As to quaternary structure, homodimer. It depends on [2Fe-2S] cluster as a cofactor. Mg(2+) serves as cofactor.

The enzyme catalyses (2R)-2,3-dihydroxy-3-methylbutanoate = 3-methyl-2-oxobutanoate + H2O. It carries out the reaction (2R,3R)-2,3-dihydroxy-3-methylpentanoate = (S)-3-methyl-2-oxopentanoate + H2O. It functions in the pathway amino-acid biosynthesis; L-isoleucine biosynthesis; L-isoleucine from 2-oxobutanoate: step 3/4. The protein operates within amino-acid biosynthesis; L-valine biosynthesis; L-valine from pyruvate: step 3/4. Functionally, functions in the biosynthesis of branched-chain amino acids. Catalyzes the dehydration of (2R,3R)-2,3-dihydroxy-3-methylpentanoate (2,3-dihydroxy-3-methylvalerate) into 2-oxo-3-methylpentanoate (2-oxo-3-methylvalerate) and of (2R)-2,3-dihydroxy-3-methylbutanoate (2,3-dihydroxyisovalerate) into 2-oxo-3-methylbutanoate (2-oxoisovalerate), the penultimate precursor to L-isoleucine and L-valine, respectively. This is Dihydroxy-acid dehydratase from Pyrobaculum neutrophilum (strain DSM 2338 / JCM 9278 / NBRC 100436 / V24Sta) (Thermoproteus neutrophilus).